A 228-amino-acid polypeptide reads, in one-letter code: 5'-methylthioadenosine/S-adenosylhomocysteine nucleosidase (228 aa).

Glutamate 11 (proton acceptor) is an active-site residue. Substrate-binding positions include glycine 77, isoleucine 151, and 172 to 173; that span reads ME. Catalysis depends on aspartate 196, which acts as the Proton donor.

Belongs to the PNP/UDP phosphorylase family. MtnN subfamily.

It carries out the reaction S-adenosyl-L-homocysteine + H2O = S-(5-deoxy-D-ribos-5-yl)-L-homocysteine + adenine. The enzyme catalyses S-methyl-5'-thioadenosine + H2O = 5-(methylsulfanyl)-D-ribose + adenine. It catalyses the reaction 5'-deoxyadenosine + H2O = 5-deoxy-D-ribose + adenine. Its pathway is amino-acid biosynthesis; L-methionine biosynthesis via salvage pathway; S-methyl-5-thio-alpha-D-ribose 1-phosphate from S-methyl-5'-thioadenosine (hydrolase route): step 1/2. Functionally, catalyzes the irreversible cleavage of the glycosidic bond in both 5'-methylthioadenosine (MTA) and S-adenosylhomocysteine (SAH/AdoHcy) to adenine and the corresponding thioribose, 5'-methylthioribose and S-ribosylhomocysteine, respectively. Also cleaves 5'-deoxyadenosine, a toxic by-product of radical S-adenosylmethionine (SAM) enzymes, into 5-deoxyribose and adenine. This is 5'-methylthioadenosine/S-adenosylhomocysteine nucleosidase from Staphylococcus saprophyticus subsp. saprophyticus (strain ATCC 15305 / DSM 20229 / NCIMB 8711 / NCTC 7292 / S-41).